The following is a 299-amino-acid chain: Acetylglutamate kinase (299 aa).

Substrate contacts are provided by residues 70 to 71 (GG), arginine 92, and asparagine 197.

The protein belongs to the acetylglutamate kinase family. ArgB subfamily.

The protein resides in the cytoplasm. It carries out the reaction N-acetyl-L-glutamate + ATP = N-acetyl-L-glutamyl 5-phosphate + ADP. The protein operates within amino-acid biosynthesis; L-arginine biosynthesis; N(2)-acetyl-L-ornithine from L-glutamate: step 2/4. Its function is as follows. Catalyzes the ATP-dependent phosphorylation of N-acetyl-L-glutamate. This chain is Acetylglutamate kinase, found in Acidiphilium cryptum (strain JF-5).